A 479-amino-acid chain; its full sequence is Cardiolipin synthase (479 aa).

The next 2 membrane-spanning stretches (helical) occupy residues 5-25 (SLLL…IIFL) and 34-54 (WAWV…YLIF). PLD phosphodiesterase domains are found at residues 216–243 (INYR…GDEY) and 392–419 (QNGF…DVRS). Active-site residues include His-221, Lys-223, Asp-228, His-397, Lys-399, and Asp-404.

It belongs to the phospholipase D family. Cardiolipin synthase subfamily.

It is found in the cell membrane. It carries out the reaction 2 a 1,2-diacyl-sn-glycero-3-phospho-(1'-sn-glycerol) = a cardiolipin + glycerol. Catalyzes the reversible phosphatidyl group transfer from one phosphatidylglycerol molecule to another to form cardiolipin (CL) (diphosphatidylglycerol) and glycerol. The sequence is that of Cardiolipin synthase (cls) from Oceanobacillus iheyensis (strain DSM 14371 / CIP 107618 / JCM 11309 / KCTC 3954 / HTE831).